We begin with the raw amino-acid sequence, 644 residues long: Putative aldehyde dehydrogenase-like protein YHR039C (644 aa).

Asparagine 15 carries an N-linked (GlcNAc...) asparagine glycan. Glutamate 354 functions as the Proton acceptor in the catalytic mechanism. Residue cysteine 389 is the Nucleophile of the active site. Asparagine 565 and asparagine 627 each carry an N-linked (GlcNAc...) asparagine glycan.

It belongs to the aldehyde dehydrogenase family. In terms of processing, N-glycosylated.

It is found in the endoplasmic reticulum. The sequence is that of Putative aldehyde dehydrogenase-like protein YHR039C (MSC7) from Saccharomyces cerevisiae (strain ATCC 204508 / S288c) (Baker's yeast).